A 370-amino-acid chain; its full sequence is Aminomethyltransferase (370 aa).

Belongs to the GcvT family. In terms of assembly, the glycine cleavage system is composed of four proteins: P, T, L and H.

The catalysed reaction is N(6)-[(R)-S(8)-aminomethyldihydrolipoyl]-L-lysyl-[protein] + (6S)-5,6,7,8-tetrahydrofolate = N(6)-[(R)-dihydrolipoyl]-L-lysyl-[protein] + (6R)-5,10-methylene-5,6,7,8-tetrahydrofolate + NH4(+). In terms of biological role, the glycine cleavage system catalyzes the degradation of glycine. This Prochlorococcus marinus (strain MIT 9515) protein is Aminomethyltransferase.